The chain runs to 273 residues: Dermonecrotic toxin LhSicTox-alphaIA1i (273 aa).

His5 is an active-site residue. Mg(2+) is bound by residues Glu25 and Asp27. The active-site Nucleophile is the His41. 2 disulfide bridges follow: Cys45-Cys51 and Cys47-Cys190. A Mg(2+)-binding site is contributed by Asp85.

It belongs to the arthropod phospholipase D family. Class II subfamily. Mg(2+) is required as a cofactor. In terms of tissue distribution, expressed by the venom gland.

It localises to the secreted. The catalysed reaction is an N-(acyl)-sphingosylphosphocholine = an N-(acyl)-sphingosyl-1,3-cyclic phosphate + choline. The enzyme catalyses an N-(acyl)-sphingosylphosphoethanolamine = an N-(acyl)-sphingosyl-1,3-cyclic phosphate + ethanolamine. It carries out the reaction a 1-acyl-sn-glycero-3-phosphocholine = a 1-acyl-sn-glycero-2,3-cyclic phosphate + choline. It catalyses the reaction a 1-acyl-sn-glycero-3-phosphoethanolamine = a 1-acyl-sn-glycero-2,3-cyclic phosphate + ethanolamine. Dermonecrotic toxins cleave the phosphodiester linkage between the phosphate and headgroup of certain phospholipids (sphingolipid and lysolipid substrates), forming an alcohol (often choline) and a cyclic phosphate. This toxin acts on sphingomyelin (SM). It may also act on ceramide phosphoethanolamine (CPE), lysophosphatidylcholine (LPC) and lysophosphatidylethanolamine (LPE), but not on lysophosphatidylserine (LPS), and lysophosphatidylglycerol (LPG). It acts by transphosphatidylation, releasing exclusively cyclic phosphate products as second products. Induces dermonecrosis, hemolysis, increased vascular permeability, edema, inflammatory response, and platelet aggregation. The protein is Dermonecrotic toxin LhSicTox-alphaIA1i of Loxosceles hirsuta (Recluse spider).